A 188-amino-acid polypeptide reads, in one-letter code: Photosystem I assembly protein Ycf4 (188 aa).

Transmembrane regions (helical) follow at residues 26-46 and 68-88; these read YFWA…GLSS and LVMG…WFVI.

Belongs to the Ycf4 family.

The protein localises to the cellular thylakoid membrane. Seems to be required for the assembly of the photosystem I complex. The sequence is that of Photosystem I assembly protein Ycf4 from Synechococcus elongatus (strain ATCC 33912 / PCC 7942 / FACHB-805) (Anacystis nidulans R2).